We begin with the raw amino-acid sequence, 521 residues long: BAR/IMD domain-containing adapter protein 2 (521 aa).

The region spanning Met-1 to Ser-250 is the IMD domain. Positions Asp-132 to Asn-153 form a coiled coil. Phosphoserine is present on residues Ser-262, Ser-324, Ser-326, and Ser-337. Residues Val-299–Ala-370 form a disordered region. A compositionally biased stretch (low complexity) spans Gln-321–Ser-335. The residue at position 341 (Thr-341) is a Phosphothreonine. The residue at position 347 (Ser-347) is a Phosphoserine. A compositionally biased stretch (polar residues) spans Thr-349 to Met-368. Position 361 is a phosphothreonine (Thr-361). A phosphoserine mark is found at Ser-367, Ser-385, Ser-396, and Ser-455. Residues Asn-375 to Ser-438 enclose the SH3 domain. The segment at His-445–Pro-480 is disordered. Over residues Ser-447–Asn-458 the composition is skewed to polar residues.

As to quaternary structure, homodimer. Interacts with CDC42 and RAC1 that have been activated by GTP binding. Interacts with ATN1, ADGRB1, DIAPH1, EPS8, SHANK1, SHANK2, SHANK3, TIAM1, WASF1 and WASF2. Interacts with ENAH after recruitment of CDC42. In terms of processing, phosphorylated on tyrosine residues by INSR in response to insulin treatment.

The protein resides in the cytoplasm. It localises to the membrane. The protein localises to the cell projection. Its subcellular location is the filopodium. It is found in the ruffle. The protein resides in the cytoskeleton. Functionally, adapter protein that links membrane-bound small G-proteins to cytoplasmic effector proteins. Necessary for CDC42-mediated reorganization of the actin cytoskeleton and for RAC1-mediated membrane ruffling. Involved in the regulation of the actin cytoskeleton by WASF family members and the Arp2/3 complex. Plays a role in neurite growth. Acts syngeristically with ENAH to promote filipodia formation. Plays a role in the reorganization of the actin cytoskeleton in response to bacterial infection. Participates in actin bundling when associated with EPS8, promoting filopodial protrusions. This chain is BAR/IMD domain-containing adapter protein 2 (BAIAP2), found in Cricetulus griseus (Chinese hamster).